We begin with the raw amino-acid sequence, 259 residues long: Ribosomal RNA small subunit methyltransferase A (259 aa).

Residues Asn13, Leu15, Gly40, Glu61, Asp85, and Asn103 each coordinate S-adenosyl-L-methionine.

This sequence belongs to the class I-like SAM-binding methyltransferase superfamily. rRNA adenine N(6)-methyltransferase family. RsmA subfamily.

It localises to the cytoplasm. It catalyses the reaction adenosine(1518)/adenosine(1519) in 16S rRNA + 4 S-adenosyl-L-methionine = N(6)-dimethyladenosine(1518)/N(6)-dimethyladenosine(1519) in 16S rRNA + 4 S-adenosyl-L-homocysteine + 4 H(+). Specifically dimethylates two adjacent adenosines (A1518 and A1519) in the loop of a conserved hairpin near the 3'-end of 16S rRNA in the 30S particle. May play a critical role in biogenesis of 30S subunits. The polypeptide is Ribosomal RNA small subunit methyltransferase A (Neisseria gonorrhoeae (strain NCCP11945)).